Here is a 152-residue protein sequence, read N- to C-terminus: Nucleoside diphosphate kinase A 2 (152 aa).

Lys12, Phe60, Arg88, Thr94, Arg105, and Asn115 together coordinate ATP. His118 functions as the Pros-phosphohistidine intermediate in the catalytic mechanism.

It belongs to the NDK family. Homohexamer. Mg(2+) is required as a cofactor. In terms of processing, the N-terminus is blocked.

Its subcellular location is the cytoplasm. It is found in the cell membrane. It localises to the nucleus. The catalysed reaction is a 2'-deoxyribonucleoside 5'-diphosphate + ATP = a 2'-deoxyribonucleoside 5'-triphosphate + ADP. The enzyme catalyses a ribonucleoside 5'-diphosphate + ATP = a ribonucleoside 5'-triphosphate + ADP. Autophosphorylation at His-118 increases serine/threonine protein kinase activity of the enzyme. Interaction with the SET complex inhibits exonuclease activity. In terms of biological role, major role in the synthesis of nucleoside triphosphates other than ATP. Possesses nucleoside-diphosphate kinase, serine/threonine-specific protein kinase, geranyl and farnesyl pyrophosphate kinase, histidine protein kinase and 3'-5' exonuclease activities. Involved in cell proliferation, differentiation and development, signal transduction, G protein-coupled receptor endocytosis, and gene expression. Required for neural development including neural patterning and cell fate determination. The sequence is that of Nucleoside diphosphate kinase A 2 (NME1-2) from Bos taurus (Bovine).